Here is a 197-residue protein sequence, read N- to C-terminus: Glycerol-3-phosphate acyltransferase (197 aa).

The next 5 helical transmembrane spans lie at isoleucine 5 to leucine 25, glycine 54 to alanine 74, alanine 80 to leucine 100, isoleucine 112 to alanine 132, and isoleucine 153 to leucine 173.

This sequence belongs to the PlsY family. In terms of assembly, probably interacts with PlsX.

It localises to the cell inner membrane. It catalyses the reaction an acyl phosphate + sn-glycerol 3-phosphate = a 1-acyl-sn-glycero-3-phosphate + phosphate. The protein operates within lipid metabolism; phospholipid metabolism. Functionally, catalyzes the transfer of an acyl group from acyl-phosphate (acyl-PO(4)) to glycerol-3-phosphate (G3P) to form lysophosphatidic acid (LPA). This enzyme utilizes acyl-phosphate as fatty acyl donor, but not acyl-CoA or acyl-ACP. In Rhodopseudomonas palustris (strain HaA2), this protein is Glycerol-3-phosphate acyltransferase.